We begin with the raw amino-acid sequence, 169 residues long: Peptide methionine sulfoxide reductase MsrA (169 aa).

The active site involves Cys10.

This sequence belongs to the MsrA Met sulfoxide reductase family.

It catalyses the reaction L-methionyl-[protein] + [thioredoxin]-disulfide + H2O = L-methionyl-(S)-S-oxide-[protein] + [thioredoxin]-dithiol. It carries out the reaction [thioredoxin]-disulfide + L-methionine + H2O = L-methionine (S)-S-oxide + [thioredoxin]-dithiol. Has an important function as a repair enzyme for proteins that have been inactivated by oxidation. Catalyzes the reversible oxidation-reduction of methionine sulfoxide in proteins to methionine. This is Peptide methionine sulfoxide reductase MsrA from Streptococcus uberis (strain ATCC BAA-854 / 0140J).